A 154-amino-acid polypeptide reads, in one-letter code: Large ribosomal subunit protein uL13 (154 aa).

Residues 132–154 (PHEAQQPETLDVGAMNRKNKRAA) are disordered.

This sequence belongs to the universal ribosomal protein uL13 family. Part of the 50S ribosomal subunit.

This protein is one of the early assembly proteins of the 50S ribosomal subunit, although it is not seen to bind rRNA by itself. It is important during the early stages of 50S assembly. The protein is Large ribosomal subunit protein uL13 of Rhodopseudomonas palustris (strain HaA2).